Consider the following 824-residue polypeptide: Phenylalanine--tRNA ligase beta subunit (824 aa).

The tRNA-binding domain occupies 39 to 153 (SEQAKNVVIG…NIPPIGSNAV (115 aa)). The B5 domain maps to 414–507 (KKSISVNLRM…RLIGYDNFDS (94 aa)). Mg(2+)-binding residues include Asp-485, Asp-491, Glu-494, and Glu-495. The 94-residue stretch at 730–823 (PTVPYMERDI…LKEKIKAELR (94 aa)) folds into the FDX-ACB domain.

The protein belongs to the phenylalanyl-tRNA synthetase beta subunit family. Type 1 subfamily. As to quaternary structure, tetramer of two alpha and two beta subunits. The cofactor is Mg(2+).

Its subcellular location is the cytoplasm. The catalysed reaction is tRNA(Phe) + L-phenylalanine + ATP = L-phenylalanyl-tRNA(Phe) + AMP + diphosphate + H(+). This chain is Phenylalanine--tRNA ligase beta subunit, found in Prochlorococcus marinus (strain NATL2A).